A 1755-amino-acid polypeptide reads, in one-letter code: Transposon Ty1-DR1 Gag-Pol polyprotein (1755 aa).

Polar residues-rich tracts occupy residues 1–10, 48–60, and 127–152; these read MESQQLSNYP, TKANSQQTTTPAS, and QSQFPQYPSSVGTPLSTPSPESGNTF. 3 disordered regions span residues 1 to 93, 126 to 173, and 352 to 421; these read MESQ…MMTQ, PQSQ…RPPP, and GSRN…SKST. Low complexity predominate over residues 153 to 165; sequence TDSSSADSDMTST. Positions 299–401 are RNA-binding; the sequence is NNGIHINNKV…NSKSKTARAH (103 aa). The span at 402 to 418 shows a compositional bias: low complexity; it reads NVSTSNNSPSTDNDSIS. At serine 416 the chain carries Phosphoserine. Catalysis depends on aspartate 461, which acts as the For protease activity; shared with dimeric partner. The tract at residues 583–640 is integrase-type zinc finger-like; sequence NVHTSESTRKYPYPFIHRMLAHANAQTIRYSLKNNTITYFNESDVDWSSAIDYQCPDC. The Integrase catalytic domain maps to 660-835; it reads NSYEPFQYLH…AGLDISTLLP (176 aa). Mg(2+) contacts are provided by aspartate 671 and aspartate 736. 3 disordered regions span residues 956–1087, 1092–1111, and 1130–1187; these read SKAV…ETEK, RSPSIDASPPENNSSHNIVP, and DLPL…DNET. Residues 960 to 969 are compositionally biased toward low complexity; that stretch reads SPTDSTPPST. The span at 1005 to 1015 shows a compositional bias: polar residues; that stretch reads STPQISNIEST. Residues 1038–1053 are compositionally biased toward basic and acidic residues; sequence ESSHASKSKDFRHSDS. Composition is skewed to polar residues over residues 1054–1082 and 1101–1111; these read YSENETNHTNVPISSTGGTNNKTVPQISD and PENNSSHNIVP. Positions 1178 to 1212 match the Bipartite nuclear localization signal motif; that stretch reads KKRSLEDNETEIKVSRDTWNTKNMRSLEPPRSKKR. A Reverse transcriptase Ty1/copia-type domain is found at 1338-1476; that stretch reads NNYYITQLDI…DILGLEIKYQ (139 aa). Mg(2+) contacts are provided by aspartate 1346, aspartate 1427, aspartate 1428, aspartate 1610, glutamate 1652, and aspartate 1685. The 143-residue stretch at 1610-1752 folds into the RNase H Ty1/copia-type domain; the sequence is DASYGNQPYY…IKTFKLLTNK (143 aa).

As to quaternary structure, the capsid protein forms a homotrimer, from which the VLPs are assembled. The protease is a homodimer, whose active site consists of two apposed aspartic acid residues. In terms of processing, initially, virus-like particles (VLPs) are composed of the structural unprocessed proteins Gag and Gag-Pol, and also contain the host initiator methionine tRNA (tRNA(i)-Met) which serves as a primer for minus-strand DNA synthesis, and a dimer of genomic Ty RNA. Processing of the polyproteins occurs within the particle and proceeds by an ordered pathway, called maturation. First, the protease (PR) is released by autocatalytic cleavage of the Gag-Pol polyprotein yielding capsid protein p45 and a Pol-p154 precursor protein. This cleavage is a prerequisite for subsequent processing of Pol-p154 at the remaining sites to release the mature structural and catalytic proteins. Maturation takes place prior to the RT reaction and is required to produce transposition-competent VLPs.

The protein resides in the cytoplasm. It localises to the nucleus. It catalyses the reaction DNA(n) + a 2'-deoxyribonucleoside 5'-triphosphate = DNA(n+1) + diphosphate. The enzyme catalyses Endonucleolytic cleavage to 5'-phosphomonoester.. Functionally, capsid protein (CA) is the structural component of the virus-like particle (VLP), forming the shell that encapsulates the retrotransposons dimeric RNA genome. The particles are assembled from trimer-clustered units and there are holes in the capsid shells that allow for the diffusion of macromolecules. CA also has nucleocapsid-like chaperone activity, promoting primer tRNA(i)-Met annealing to the multipartite primer-binding site (PBS), dimerization of Ty1 RNA and initiation of reverse transcription. The aspartyl protease (PR) mediates the proteolytic cleavages of the Gag and Gag-Pol polyproteins after assembly of the VLP. In terms of biological role, reverse transcriptase/ribonuclease H (RT) is a multifunctional enzyme that catalyzes the conversion of the retro-elements RNA genome into dsDNA within the VLP. The enzyme displays a DNA polymerase activity that can copy either DNA or RNA templates, and a ribonuclease H (RNase H) activity that cleaves the RNA strand of RNA-DNA heteroduplexes during plus-strand synthesis and hydrolyzes RNA primers. The conversion leads to a linear dsDNA copy of the retrotransposon that includes long terminal repeats (LTRs) at both ends. Its function is as follows. Integrase (IN) targets the VLP to the nucleus, where a subparticle preintegration complex (PIC) containing at least integrase and the newly synthesized dsDNA copy of the retrotransposon must transit the nuclear membrane. Once in the nucleus, integrase performs the integration of the dsDNA into the host genome. This is Transposon Ty1-DR1 Gag-Pol polyprotein (TY1B-DR1) from Saccharomyces cerevisiae (strain ATCC 204508 / S288c) (Baker's yeast).